The chain runs to 88 residues: Small ribosomal subunit protein bS16 (88 aa).

It belongs to the bacterial ribosomal protein bS16 family.

This is Small ribosomal subunit protein bS16 from Geobacter sp. (strain M21).